We begin with the raw amino-acid sequence, 480 residues long: Aspartyl/glutamyl-tRNA(Asn/Gln) amidotransferase subunit B (480 aa).

The protein belongs to the GatB/GatE family. GatB subfamily. Heterotrimer of A, B and C subunits.

It carries out the reaction L-glutamyl-tRNA(Gln) + L-glutamine + ATP + H2O = L-glutaminyl-tRNA(Gln) + L-glutamate + ADP + phosphate + H(+). The catalysed reaction is L-aspartyl-tRNA(Asn) + L-glutamine + ATP + H2O = L-asparaginyl-tRNA(Asn) + L-glutamate + ADP + phosphate + 2 H(+). Functionally, allows the formation of correctly charged Asn-tRNA(Asn) or Gln-tRNA(Gln) through the transamidation of misacylated Asp-tRNA(Asn) or Glu-tRNA(Gln) in organisms which lack either or both of asparaginyl-tRNA or glutaminyl-tRNA synthetases. The reaction takes place in the presence of glutamine and ATP through an activated phospho-Asp-tRNA(Asn) or phospho-Glu-tRNA(Gln). The sequence is that of Aspartyl/glutamyl-tRNA(Asn/Gln) amidotransferase subunit B from Hahella chejuensis (strain KCTC 2396).